The primary structure comprises 452 residues: tRNA modification GTPase MnmE (452 aa).

Arg21, Glu78, and Lys118 together coordinate (6S)-5-formyl-5,6,7,8-tetrahydrofolate. Positions 214–375 constitute a TrmE-type G domain; that stretch reads GMKVVIAGRP…LREHLKQSMG (162 aa). Residue Asn224 coordinates K(+). GTP-binding positions include 224 to 229, 243 to 249, and 268 to 271; these read NAGKSS, TDIAGTT, and DTAG. Ser228 lines the Mg(2+) pocket. K(+) is bound by residues Thr243, Ile245, and Thr248. Thr249 lines the Mg(2+) pocket. A (6S)-5-formyl-5,6,7,8-tetrahydrofolate-binding site is contributed by Lys452.

The protein belongs to the TRAFAC class TrmE-Era-EngA-EngB-Septin-like GTPase superfamily. TrmE GTPase family. As to quaternary structure, homodimer. Heterotetramer of two MnmE and two MnmG subunits. K(+) is required as a cofactor.

The protein resides in the cytoplasm. Functionally, exhibits a very high intrinsic GTPase hydrolysis rate. Involved in the addition of a carboxymethylaminomethyl (cmnm) group at the wobble position (U34) of certain tRNAs, forming tRNA-cmnm(5)s(2)U34. The protein is tRNA modification GTPase MnmE of Actinobacillus succinogenes (strain ATCC 55618 / DSM 22257 / CCUG 43843 / 130Z).